The sequence spans 280 residues: uncharacterized protein (280 aa).

Residues 1-78 enclose the HTH rpiR-type domain; that stretch reads MDVIQRIKEK…VLLAQSISRA (78 aa). The segment at residues 37–57 is a DNA-binding region (H-T-H motif); sequence ISDLSEKAGVKSEASVVKFYK. The SIS domain maps to 123 to 263; sequence TVDLFKNAQR…YTLLAARDPR (141 aa).

This is an uncharacterized protein from Thermotoga maritima (strain ATCC 43589 / DSM 3109 / JCM 10099 / NBRC 100826 / MSB8).